The chain runs to 274 residues: Kit ligand (274 aa).

An N-terminal signal peptide occupies residues 1–25 (MKKTQTWIITCIYLQLLLFNPLVRT). Over 26 to 215 (KGICRNRVTD…ANPLGDSNLQ (190 aa)) the chain is Extracellular. Cystine bridges form between Cys29–Cys114 and Cys68–Cys164. Residues Asn90, Asn97, Asn145, and Asn196 are each glycosylated (N-linked (GlcNAc...) asparagine). The chain crosses the membrane as a helical span at residues 216–238 (WAAMALPAFFSLVIGFAFGALYW). Over 239–274 (KKKQPNLTRTAENIQINEEDNEISMLQEKEREFQEV) the chain is Cytoplasmic.

It belongs to the SCF family. As to quaternary structure, homodimer, non-covalently linked. Heterotetramer with KIT, binding two KIT molecules; thereby mediates KIT dimerization and subsequent activation by autophosphorylation. A soluble form is produced by proteolytic processing of isoform 1 in the extracellular domain.

It is found in the cytoplasm. The protein resides in the cytoskeleton. The protein localises to the cell membrane. Its subcellular location is the cell projection. It localises to the lamellipodium. It is found in the filopodium. The protein resides in the secreted. Ligand for the receptor-type protein-tyrosine kinase KIT. Plays an essential role in the regulation of cell survival and proliferation, hematopoiesis, stem cell maintenance, gametogenesis, mast cell development, migration and function, and in melanogenesis. KITLG/SCF binding can activate several signaling pathways. Promotes phosphorylation of PIK3R1, the regulatory subunit of phosphatidylinositol 3-kinase, and subsequent activation of the kinase AKT1. KITLG/SCF and KIT also transmit signals via GRB2 and activation of RAS, RAF1 and the MAP kinases MAPK1/ERK2 and/or MAPK3/ERK1. KITLG/SCF and KIT promote activation of STAT family members STAT1, STAT3 and STAT5. KITLG/SCF and KIT promote activation of PLCG1, leading to the production of the cellular signaling molecules diacylglycerol and inositol 1,4,5-trisphosphate. KITLG/SCF acts synergistically with other cytokines, probably interleukins. This is Kit ligand (KITLG) from Neovison vison (American mink).